The primary structure comprises 285 residues: Secreted RxLR effector protein 106 (285 aa).

The first 24 residues, 1–24 (MSVRYAGLLLAAVAVSAHINEVNS), serve as a signal peptide directing secretion. The short motif at 42-54 (RDLRSADNGNEER) is the RxLR-dEER element. Asn182 and Asn187 each carry an N-linked (GlcNAc...) asparagine glycan. Residues 220–229 (IEGDKEKKGG) show a composition bias toward basic and acidic residues. The segment at 220–262 (IEGDKEKKGGPDYVEGTESRGKKRGQTEAPDLEPGLTPKQKRL) is disordered. The short motif at 239–264 (RGKKRGQTEAPDLEPGLTPKQKRLKR) is the Bipartite nuclear localization signal element.

It belongs to the RxLR effector family. As to quaternary structure, interacts with host RCD1 and SRO1 transcription co-regulators.

It localises to the secreted. The protein resides in the host nucleus. Secreted effector that suppresses pathogen-associated molecular pattern (PAMP)-triggered immunity (PTI) in host plants. Binds to RCD1 and SRO1 transcription co-regulators to attenuate transcriptional activation of salicylic acid (SA)-induced defense genes and alters plant growth responses to light. Suppresses SA signal transduction but not SA levels. The protein is Secreted RxLR effector protein 106 of Hyaloperonospora arabidopsidis (strain Emoy2) (Downy mildew agent).